Consider the following 429-residue polypeptide: MKLQKPKGTQDILPAESAKWQYVEGFAREIFKRYNYAEVRTPIFEHYEVISRSVGDTTDIVTKEMYDFYDKGDRHITLRPEGTAPVVRSYVENKLFAPEVQKPSKFYYMGPMFRYERPQAGRLRQFHQIGVECFGSSNPATDVETIVMAAHFLKEIGIQGVKLHLNTLGNPESRAAYRQALIDYLTPLKETLSKDSQRRLEENPLRVLDSKEKEDKVAVENAPSILDFLDEESQTHFDAVRQMLENLGVDYIIDTNMVRGLDYYNHTIFEFITEIEGNDLTVCAGGRYDGLVAYFGGPETAGFGFGLGVERLLLILEKQGVALPIENALDVYIAVLGDGANVKALELVQALRQQGFKAERDYLNRKLKAQFKSADVFAAKTLITLGESEVESRQVTVKNNQTREEVQVSLETISQNFSEIFEKLGFYTQ.

The protein belongs to the class-II aminoacyl-tRNA synthetase family. In terms of assembly, homodimer.

The protein resides in the cytoplasm. The enzyme catalyses tRNA(His) + L-histidine + ATP = L-histidyl-tRNA(His) + AMP + diphosphate + H(+). In Streptococcus pneumoniae (strain 70585), this protein is Histidine--tRNA ligase.